We begin with the raw amino-acid sequence, 20 residues long: Small ribosomal subunit protein bS20 (20 aa).

The interval 1 to 20 (ANNPGARKAIRKIEARTEVN) is disordered. Positions 11-20 (RKIEARTEVN) are enriched in basic and acidic residues.

This sequence belongs to the bacterial ribosomal protein bS20 family.

Its function is as follows. Binds directly to 16S ribosomal RNA. The sequence is that of Small ribosomal subunit protein bS20 (rpsT) from Brevundimonas vesicularis (Pseudomonas vesicularis).